The primary structure comprises 195 residues: Pyruvoyl-dependent arginine decarboxylase AaxB (195 aa).

Residue Ser-53 is modified to Pyruvic acid (Ser).

It belongs to the pyruvoyl-dependent arginine decarboxylase family. As to quaternary structure, trimer of an alpha-beta dimer. It depends on pyruvate as a cofactor.

The protein localises to the cytoplasm. The enzyme catalyses L-arginine + H(+) = agmatine + CO2. Its function is as follows. Part of the AaxABC system, catalyzes the decarboxylation of L-arginine. The arginine uptake by the bacterium in the macrophage may be a virulence factor against the host innate immune response. This is Pyruvoyl-dependent arginine decarboxylase AaxB (aaxB) from Chlamydia trachomatis serovar D (strain ATCC VR-885 / DSM 19411 / UW-3/Cx).